Reading from the N-terminus, the 375-residue chain is Probable G-protein coupled receptor 34 (375 aa).

The Extracellular portion of the chain corresponds to 1–54; it reads MTTTSVDSWLCSSHGMHFITNYSDQASQNFSGVPNVTSCPMDEKLLSTVLTTFY. Residues Asn-21, Asn-29, and Asn-35 are each glycosylated (N-linked (GlcNAc...) asparagine). The chain crosses the membrane as a helical span at residues 55 to 75; that stretch reads SVIFLVGLVGNIIALYVFLGI. The Cytoplasmic portion of the chain corresponds to 76 to 81; that stretch reads HRKRNS. Residues 82–102 form a helical membrane-spanning segment; the sequence is IQIYLLNVAVADLLLIFCLPF. At 103-121 the chain is on the extracellular side; it reads RIMYHINQNKWTLGVILCK. Residues Cys-120 and Cys-197 are joined by a disulfide bond. Residues 122-142 form a helical membrane-spanning segment; that stretch reads VVGTLFYMNMYISIILLGFIS. Topologically, residues 143 to 164 are cytoplasmic; it reads LDRYIKINRSIQQRRAITTKQS. The chain crosses the membrane as a helical span at residues 165 to 185; the sequence is IYVCCIVWTVALAGFLTMIIL. Topologically, residues 186–209 are extracellular; that stretch reads TLKKGGHNSTMCFHYRDRHNAKGE. Asn-193 carries N-linked (GlcNAc...) asparagine glycosylation. Residues 210 to 230 traverse the membrane as a helical segment; it reads AIFNFVLVVMFWLIFLLIILS. At 231-262 the chain is on the cytoplasmic side; the sequence is YIKIGKNLLRISKRRSKFPNSGKYATTARNSF. Residues 263–283 form a helical membrane-spanning segment; sequence IVLIIFTICFVPYHAFRFIYI. The Extracellular segment spans residues 284 to 303; sequence SSQLNVSSCYWKEIIHKTNE. Asn-288 carries N-linked (GlcNAc...) asparagine glycosylation. Residues 304–324 form a helical membrane-spanning segment; sequence IMLVFSSFNSCLDPVMYFLMS. At 325 to 375 the chain is on the cytoplasmic side; it reads SNIRKIMCQLLFRRFQSEASRSESTSEFKPGHSLHDLSVTVKMPQYSTKGN.

The protein belongs to the G-protein coupled receptor 1 family. Highly expressed in glial cells such as astrocytes and microglia.

The protein resides in the cell membrane. Its function is as follows. G-protein-coupled receptor of lysophosphatidylserine (LysoPS) that plays different roles in immune response. Acts a damage-sensing receptor that triggers tissue repair upon recognition of dying neutrophils. Mechanistically, apoptotic neutrophils release lysophosphatydilserine that are recognized by type 3 innate lymphoid cells (ILC3s) via GPR34, which activates downstream PI3K-AKT and RAS-ERK signaling pathways leading to STAT3 activation and IL-22 production. Plays an important role in microglial function, controlling morphology and phagocytosis. The sequence is that of Probable G-protein coupled receptor 34 (Gpr34) from Mus musculus (Mouse).